The sequence spans 88 residues: Small ribosomal subunit protein bS20 (88 aa).

The interval 1-20 (MANHKSAEKRARQTIKRTER) is disordered.

This sequence belongs to the bacterial ribosomal protein bS20 family.

Its function is as follows. Binds directly to 16S ribosomal RNA. The protein is Small ribosomal subunit protein bS20 of Campylobacter fetus subsp. fetus (strain 82-40).